Reading from the N-terminus, the 849-residue chain is DNA mismatch repair protein MutS (849 aa).

Gly602–Ser609 is an ATP binding site.

It belongs to the DNA mismatch repair MutS family.

Functionally, this protein is involved in the repair of mismatches in DNA. It is possible that it carries out the mismatch recognition step. This protein has a weak ATPase activity. This Streptococcus sanguinis (strain SK36) protein is DNA mismatch repair protein MutS.